A 606-amino-acid polypeptide reads, in one-letter code: KH domain-containing protein At4g18375 (606 aa).

The span at 1–10 (MVERKKRKQI) shows a compositional bias: basic residues. The segment at 1 to 26 (MVERKKRKQIQRNNSESNRNQKRRIS) is disordered. KH domains are found at residues 35–99 (LVVY…IGFT), 138–210 (NKEC…LFAV), 311–380 (ELVF…VEAV), 394–455 (NVKM…LIQI), and 535–599 (SSAL…ENLV).

It localises to the nucleus. This chain is KH domain-containing protein At4g18375, found in Arabidopsis thaliana (Mouse-ear cress).